The primary structure comprises 340 residues: tRNA N6-adenosine threonylcarbamoyltransferase (340 aa).

2 residues coordinate Fe cation: H111 and H115. Substrate contacts are provided by residues 133-137 (VVSGG), D166, G179, D183, and N274. D299 contributes to the Fe cation binding site.

It belongs to the KAE1 / TsaD family. Fe(2+) serves as cofactor.

The protein resides in the cytoplasm. It carries out the reaction L-threonylcarbamoyladenylate + adenosine(37) in tRNA = N(6)-L-threonylcarbamoyladenosine(37) in tRNA + AMP + H(+). Functionally, required for the formation of a threonylcarbamoyl group on adenosine at position 37 (t(6)A37) in tRNAs that read codons beginning with adenine. Is involved in the transfer of the threonylcarbamoyl moiety of threonylcarbamoyl-AMP (TC-AMP) to the N6 group of A37, together with TsaE and TsaB. TsaD likely plays a direct catalytic role in this reaction. The chain is tRNA N6-adenosine threonylcarbamoyltransferase from Brachyspira hyodysenteriae (strain ATCC 49526 / WA1).